A 190-amino-acid polypeptide reads, in one-letter code: Recombination protein RecR (190 aa).

The C4-type zinc-finger motif lies at 58 to 73; that stretch reads CEQCGALSENELCEIC. Residues 81–167 form the Toprim domain; it reads NILCIVESPK…TFSKIAQGIP (87 aa).

It belongs to the RecR family.

Functionally, may play a role in DNA repair. It seems to be involved in an RecBC-independent recombinational process of DNA repair. It may act with RecF and RecO. This is Recombination protein RecR from Campylobacter jejuni (strain RM1221).